A 421-amino-acid chain; its full sequence is Aspartokinase (421 aa).

7-10 provides a ligand contact to ATP; it reads KYGG. 25–30 is a substrate binding site; it reads RIVATK. Ser-41 is a binding site for ATP. Substrate-binding positions include 45-49, Glu-74, 125-126, 151-154, and Ser-154; these read DTTDE, LD, and RGGS. Residues 174 to 175, 180 to 185, and Lys-210 contribute to the ATP site; these read SD and YTADPR. ACT domains lie at 267 to 343 and 349 to 421; these read VTVL…YDDQ and LVGA…GTGR. Residues Asp-274, 274-279, 292-294, Gln-298, 360-361, 374-375, and 381-382 contribute to the substrate site; these read DKPGEA, NID, VT, NI, and SE.

Belongs to the aspartokinase family. As to quaternary structure, tetramer consisting of 2 isoforms Alpha (catalytic and regulation) and of a homodimer of 2 isoforms Beta (regulation). The dimerization of the beta isoforms is stabilized by the bonding of threonine.

It catalyses the reaction L-aspartate + ATP = 4-phospho-L-aspartate + ADP. The protein operates within amino-acid biosynthesis; L-lysine biosynthesis via DAP pathway; (S)-tetrahydrodipicolinate from L-aspartate: step 1/4. Its pathway is amino-acid biosynthesis; L-methionine biosynthesis via de novo pathway; L-homoserine from L-aspartate: step 1/3. It participates in amino-acid biosynthesis; L-threonine biosynthesis; L-threonine from L-aspartate: step 1/5. Feedback inhibition by lysine and threonine, but he enzyme is moderately inhibited by lysine alone, and threonine alone has no effect. Functionally, catalyzes the phosphorylation of the beta-carboxyl group of aspartic acid with ATP to yield 4-phospho-L-aspartate, which is involved in the branched biosynthetic pathway leading to the biosynthesis of amino acids lysine, threonine, isoleucine and methionine. This is Aspartokinase (lysC) from Corynebacterium glutamicum (strain ATCC 13032 / DSM 20300 / JCM 1318 / BCRC 11384 / CCUG 27702 / LMG 3730 / NBRC 12168 / NCIMB 10025 / NRRL B-2784 / 534).